The sequence spans 389 residues: S-adenosylmethionine synthase (389 aa).

ATP is bound at residue histidine 15. Aspartate 17 is a binding site for Mg(2+). Glutamate 43 provides a ligand contact to K(+). Residues glutamate 56 and glutamine 99 each coordinate L-methionine. Residues 99 to 109 (QSSDIQYSIDH) are flexible loop. ATP contacts are provided by residues 166–168 (DAK), 232–233 (RF), aspartate 241, 247–248 (RK), serine 264, and lysine 268. Aspartate 241 serves as a coordination point for L-methionine. Lysine 272 serves as a coordination point for L-methionine.

The protein belongs to the AdoMet synthase family. Homotetramer; dimer of dimers. Mg(2+) serves as cofactor. Requires K(+) as cofactor.

It localises to the cytoplasm. The catalysed reaction is L-methionine + ATP + H2O = S-adenosyl-L-methionine + phosphate + diphosphate. The protein operates within amino-acid biosynthesis; S-adenosyl-L-methionine biosynthesis; S-adenosyl-L-methionine from L-methionine: step 1/1. Catalyzes the formation of S-adenosylmethionine (AdoMet) from methionine and ATP. The overall synthetic reaction is composed of two sequential steps, AdoMet formation and the subsequent tripolyphosphate hydrolysis which occurs prior to release of AdoMet from the enzyme. The sequence is that of S-adenosylmethionine synthase from Blochmanniella pennsylvanica (strain BPEN).